Here is a 288-residue protein sequence, read N- to C-terminus: Fatty acid-binding protein TM_1468 (288 aa).

A DegV domain is found at 3–283 (VKILVDSTAD…PGTVGFGIEV (281 aa)). Hexadecanoate is bound by residues Thr-63 and Ser-96.

In terms of assembly, monomer.

Binds long-chain fatty acids, such as palmitate, and may play a role in lipid transport or fatty acid metabolism. The polypeptide is Fatty acid-binding protein TM_1468 (Thermotoga maritima (strain ATCC 43589 / DSM 3109 / JCM 10099 / NBRC 100826 / MSB8)).